Consider the following 219-residue polypeptide: Thiopurine S-methyltransferase (219 aa).

4 residues coordinate S-adenosyl-L-methionine: W10, L45, E66, and R123.

This sequence belongs to the class I-like SAM-binding methyltransferase superfamily. TPMT family.

It localises to the cytoplasm. The enzyme catalyses S-adenosyl-L-methionine + a thiopurine = S-adenosyl-L-homocysteine + a thiopurine S-methylether.. This Marinobacter nauticus (strain ATCC 700491 / DSM 11845 / VT8) (Marinobacter aquaeolei) protein is Thiopurine S-methyltransferase.